The following is a 302-amino-acid chain: Mitochondrial glycine transporter (302 aa).

Solcar repeat units lie at residues 22 to 112 (HPVF…LKHH), 119 to 203 (PKPL…AKKL), and 213 to 297 (FSPV…MMEK). Helical transmembrane passes span 28–53 (FVCGSLSGTCSTLLFQPLDLVKTRIQ), 87–113 (GVSPSFLRCIPGVGLYFSTLYTLKHHF), 125–150 (VMLGAGSRTVAAVCMLPFTVVKTRYE), 178–201 (GLTATLMRDAPFSGIYLMFYTRAK), 217–243 (LNFSCGIVAGILASVATQPADVIKTHM), and 272–290 (GGVPRALRRTLMAAMAWTV).

The protein belongs to the mitochondrial carrier (TC 2.A.29) family. SLC25A38 subfamily.

It is found in the mitochondrion inner membrane. It carries out the reaction glycine(in) = glycine(out). Functionally, mitochondrial glycine transporter that imports glycine into the mitochondrial matrix. Plays an important role in providing glycine for the first enzymatic step in heme biosynthesis, the condensation of glycine with succinyl-CoA to produce 5-aminolevulinate (ALA) in the mitochondrial matrix. Required during erythropoiesis. Its function is as follows. May play a role as pro-apoptotic protein that induces caspase-dependent apoptosis. In Xenopus laevis (African clawed frog), this protein is Mitochondrial glycine transporter.